Here is a 726-residue protein sequence, read N- to C-terminus: Ribonuclease R (726 aa).

Positions R264 to L592 constitute an RNB domain. The S1 motif domain occupies G645–V726.

Belongs to the RNR ribonuclease family. RNase R subfamily.

The protein localises to the cytoplasm. It carries out the reaction Exonucleolytic cleavage in the 3'- to 5'-direction to yield nucleoside 5'-phosphates.. In terms of biological role, 3'-5' exoribonuclease that releases 5'-nucleoside monophosphates and is involved in maturation of structured RNAs. The chain is Ribonuclease R from Mycoplasma pneumoniae (strain ATCC 29342 / M129 / Subtype 1) (Mycoplasmoides pneumoniae).